The chain runs to 859 residues: DNA-directed RNA polymerase subunit Rpo1C (859 aa).

It belongs to the RNA polymerase beta' chain family. Part of the RNA polymerase complex. In terms of processing, this protein undergoes a protein self splicing that involves a post-translational excision of the intervening region (intein) followed by peptide ligation.

The protein resides in the cytoplasm. The enzyme catalyses RNA(n) + a ribonucleoside 5'-triphosphate = RNA(n+1) + diphosphate. DNA-dependent RNA polymerase (RNAP) catalyzes the transcription of DNA into RNA using the four ribonucleoside triphosphates as substrates. Forms part of the jaw domain. The chain is DNA-directed RNA polymerase subunit Rpo1C from Methanocaldococcus jannaschii (strain ATCC 43067 / DSM 2661 / JAL-1 / JCM 10045 / NBRC 100440) (Methanococcus jannaschii).